Consider the following 115-residue polypeptide: Large ribosomal subunit protein bL19 (115 aa).

The protein belongs to the bacterial ribosomal protein bL19 family.

Functionally, this protein is located at the 30S-50S ribosomal subunit interface and may play a role in the structure and function of the aminoacyl-tRNA binding site. The polypeptide is Large ribosomal subunit protein bL19 (Desulforapulum autotrophicum (strain ATCC 43914 / DSM 3382 / VKM B-1955 / HRM2) (Desulfobacterium autotrophicum)).